We begin with the raw amino-acid sequence, 376 residues long: Putative transcription factor egl-18 (376 aa).

4 disordered regions span residues 1–33 (MSIS…CSGC), 65–122 (NNEL…LPDF), 148–197 (MVQQ…SDIP), and 240–264 (ATPS…PNAA). Over residues 9-27 (TRPESAEQQHHEVLQRPSD) the composition is skewed to basic and acidic residues. Low complexity-rich tracts occupy residues 68-89 (LKSS…RSSP) and 165-175 (QQSVSPPQSKS). Residues 176–195 (VKIEDPMDQDVKQEESERSD) are compositionally biased toward basic and acidic residues. Residues 241–250 (TPSSQSQDSS) are compositionally biased toward polar residues. The GATA-type zinc-finger motif lies at 266–290 (CSNCRTDKTTAWRRDAEGKLVCNPC).

As to expression, expressed in differentiated seam cells. Expressed in the head and trunk.

The protein localises to the nucleus. Probable transcription factor. Involved in embryonic development and in vulval development in larvae, acting redundantly, at least in part, with elt-6. Perhaps acting together with elt-6, may form a positive feedback loop to initiate and maintain lin-39 gene expression to ensure proper vulval precursor cell (VPC) fate specification. Together with elt-6, acts as a downstream target of the Wnt/beta-catenin asymmetry pathway, required to adopt or maintain the seam cell fate. Required in seam cells, acting redundantly with elt-6, to promote production of alae, expression of several seam-specific genes and maintenance of seam cells in an unfused state. Plays a role in longevity. May form a transcriptional circuit with GATA factors elt-3 and elt-6. This chain is Putative transcription factor egl-18, found in Caenorhabditis elegans.